The following is a 123-amino-acid chain: Large ribosomal subunit protein uL14 (123 aa).

Belongs to the universal ribosomal protein uL14 family. In terms of assembly, part of the 50S ribosomal subunit. Forms a cluster with proteins L3 and L19. In the 70S ribosome, L14 and L19 interact and together make contacts with the 16S rRNA in bridges B5 and B8.

In terms of biological role, binds to 23S rRNA. Forms part of two intersubunit bridges in the 70S ribosome. The protein is Large ribosomal subunit protein uL14 of Chromohalobacter salexigens (strain ATCC BAA-138 / DSM 3043 / CIP 106854 / NCIMB 13768 / 1H11).